The following is a 479-amino-acid chain: Long-chain alcohol oxidase (479 aa).

The 170-residue stretch at 14 to 183 (QILRPSAAYT…LAVRIRCREQ (170 aa)) folds into the FAD-binding PCMH-type domain. Histidine 49 is modified (pros-8alpha-FAD histidine). FAD is bound by residues threonine 113, glycine 116, 120–123 (TGTH), and isoleucine 173. Residues 241–258 (LYWLGTMDYGLILQILFL) traverse the membrane as a helical segment. FAD is bound by residues arginine 369 and histidine 425.

This sequence belongs to the oxygen-dependent FAD-linked oxidoreductase family. The cofactor is FAD.

The protein resides in the cell membrane. The catalysed reaction is a long-chain primary fatty alcohol + O2 = a long-chain fatty aldehyde + H2O2. It carries out the reaction dodecan-1-ol + O2 = dodecanal + H2O2. It catalyses the reaction tetradecan-1-ol + O2 = tetradecanal + H2O2. The enzyme catalyses octan-1-ol + O2 = octanal + H2O2. The catalysed reaction is decan-1-ol + O2 = decanal + H2O2. It functions in the pathway lipid metabolism; fatty acid metabolism. In vitro catalyzes the oxidation of a range of fatty alcohols having a carbon chain length of six and above, with a reduction of O2 to H2O2. Shows the highest activity with 1-dodecanol. Is likely involved in lipid metabolism. This Uncultured marine euryarchaeote protein is Long-chain alcohol oxidase.